The sequence spans 243 residues: Terpene cyclase atmB (243 aa).

Transmembrane regions (helical) follow at residues 19-39, 48-68, 78-98, 112-132, 134-154, 169-189, and 205-225; these read IADV…VGMV, YGMA…YGLI, GVFL…IKFG, LPLI…ALAA, IGPA…LSVG, SYTL…SAWL, and LILW…VCFY.

It belongs to the paxB family.

The protein localises to the membrane. Functionally, terpene cyclase; part of the ATM2 gene cluster that mediates the biosynthesis of aflatrem, a tremorgenic mycotoxin with acute neurotoxic effects. Synthesis of geranylgeranyl diphosphate (GGPP) by AtmG (a GGPP synthase) precedes condensation of GGPP with indole 3-glycerol phosphate, followed by epoxidation and cyclization by AtmM (a FAD-dependent monooxygenase) and AtmC (a prenyltransferase) to produce paspaline. AtmB is also essential for paspaline production, but its exact role has not been identified yet. AtmP, a cytochrome P450 monooxygenase, subsequently converts paspaline to 13-desoxypaxilline via PC-M6 by removal of the C-30 methyl group and oxidation at C-10. AtmQ, a cytochrome P450 monooxygenase, then catalyzes the oxidation of 13-desoxypaxilline, first at C-7 to produce paspalicine and then at C-13 to form paspalinine. Finally, AtmD prenylates paspalinine to form aflatrem. This chain is Terpene cyclase atmB, found in Aspergillus flavus.